A 497-amino-acid polypeptide reads, in one-letter code: FAD-linked oxidoreductase fogF (497 aa).

Positions 1–18 (MRRNILTALACSWLTAHA) are cleaved as a signal peptide. The 171-residue stretch at 59–229 (NAPTYAGAIS…TSATYKLHKL (171 aa)) folds into the FAD-binding PCMH-type domain.

Belongs to the oxygen-dependent FAD-linked oxidoreductase family. FAD is required as a cofactor.

It functions in the pathway secondary metabolite biosynthesis. FAD-linked oxidoreductase; part of the gene cluster that mediates the biosynthesis of flavoglaucin and congeners (including aspergin, dihydroauroglaucin and auroglaucin), prenylated salicylaldehyde derivatives carrying a saturated or an unsaturated C-7 side chain. The PKS fogA releases the carboxylic acid (8E,10E,12E)-3,5,7-trihydroxytetradeca-8,10,12-trienoic acid as its product, as well as derivatives with one and two double bonds. FogA is indeed able to reduce the initial triketide, thus being at least partially responsible for the differently saturated heptyl side chains of flavoglaucin congeners. The oxidoreductases fogB, fogC and fogD modify the nascent polyketide in fogA-bound form and, together, fogA, fogB, fogC and fogD are necessary for the formation of the aromatic core and the cyclized PKS products are released as salicyl alcohols. In particular, fogB is responsible for oxidation of a hydroxyl group or reduction of remaining double bond(s) at the C-7 residue whereas fogD is probably involved in the reductive release of the modified PKS products. The cytochrome P450 monooxygenase fogE is then responsible for the hydroxylation at C-3 of the benzene ring. The fogE products are substrates of the prenyltransferase fogH and the prenylated benzyl alcohols are subsequently oxidized by the fogF to produce the final aryl aldehydes flavoglaucin and congeners. The short-chain dehydrogenase fogG does not seem to be involved in the biosynthesis of the prenylated salicylaldehyde derivatives. This chain is FAD-linked oxidoreductase fogF, found in Aspergillus ruber (strain CBS 135680).